Here is a 212-residue protein sequence, read N- to C-terminus: Secreted and transmembrane protein 1b (212 aa).

Positions 1–28 (MLAYSVTSSGLFPRMLWALLLLAASLNA) are cleaved as a signal peptide. At 29 to 160 (HNDVWDEPCC…DKPPTAVRTE (132 aa)) the chain is on the extracellular side. A disulfide bridge connects residues Cys-38 and Cys-55. Residues Asn-56, Asn-85, Asn-114, and Asn-130 are each glycosylated (N-linked (GlcNAc...) asparagine). Residues 161-181 (VIIIIAIATTIIITGIGVFVW) form a helical membrane-spanning segment. At 182 to 212 (YKQFPVAPQIQMSVPCLIHGSPGIPYLTLPP) the chain is on the cytoplasmic side.

The protein belongs to the SECTM family. In terms of assembly, interacts with CD7.

The protein localises to the cell membrane. It localises to the secreted. In terms of biological role, may be involved in thymocyte signaling. This chain is Secreted and transmembrane protein 1b (Sectm1b), found in Mus musculus (Mouse).